We begin with the raw amino-acid sequence, 321 residues long: MNKFKNIAVYGGGSFGTSLASLAAQNCNNVTLFLRDEEIAKEILHNKTNVKYLGDIKLPTHLQVTTNLSVIKDFELIIIAVPSYAFDDSIKLLKTHGISADNTLLIATKGFARNPTELFSDRLKTLLPHSTTAFFAGSNLAKELAKNLPASASIASLDIDIANKIANNLSSKTFTTNTTSDIVTLQVAGALKNIFAIKSGIDLAKKQGKNARATLIVTVLKEIAILSKALGGTASSRSLDTNLLLEAGVVGDLVLTCYSLGSRNTKFGYELGISSDKKIFLREYKELVEGQEALKLVLDLIKKYDLQMPIISEVANYVIPE.

NADPH is bound by residues Ser-14, Phe-15, Arg-35, and Lys-109. The sn-glycerol 3-phosphate site is built by Lys-109 and Gly-137. NADPH is bound at residue Ala-141. 5 residues coordinate sn-glycerol 3-phosphate: Lys-192, Asp-252, Ser-262, Arg-263, and Asn-264. Catalysis depends on Lys-192, which acts as the Proton acceptor. Arg-263 provides a ligand contact to NADPH. 2 residues coordinate NADPH: Leu-287 and Glu-289.

Belongs to the NAD-dependent glycerol-3-phosphate dehydrogenase family.

It is found in the cytoplasm. It catalyses the reaction sn-glycerol 3-phosphate + NAD(+) = dihydroxyacetone phosphate + NADH + H(+). The enzyme catalyses sn-glycerol 3-phosphate + NADP(+) = dihydroxyacetone phosphate + NADPH + H(+). The protein operates within membrane lipid metabolism; glycerophospholipid metabolism. Functionally, catalyzes the reduction of the glycolytic intermediate dihydroxyacetone phosphate (DHAP) to sn-glycerol 3-phosphate (G3P), the key precursor for phospholipid synthesis. This is Glycerol-3-phosphate dehydrogenase [NAD(P)+] from Rickettsia felis (strain ATCC VR-1525 / URRWXCal2) (Rickettsia azadi).